The chain runs to 82 residues: Immediate early response 3-interacting protein 1 (82 aa).

The next 2 membrane-spanning stretches (helical) occupy residues 2–22 (AFTL…IAVL) and 62–82 (VMRV…LLFG).

This sequence belongs to the YOS1 family.

It localises to the endoplasmic reticulum membrane. Regulator of endoplasmic reticulum secretion that acts as a key determinant of brain size. Required for secretion of extracellular matrix proteins. Required for correct brain development by depositing sufficient extracellular matrix proteins for tissue integrity and the proliferation of neural progenitors. Acts as a regulator of the unfolded protein response (UPR). The polypeptide is Immediate early response 3-interacting protein 1 (Danio rerio (Zebrafish)).